A 227-amino-acid polypeptide reads, in one-letter code: Heptaprenylglyceryl phosphate synthase (227 aa).

Lys-13 is a sn-glycerol 1-phosphate binding site. Residues Asp-15 and Thr-41 each contribute to the Mg(2+) site. Sn-glycerol 1-phosphate-binding positions include 159-164 (YLEYSG), Gly-189, and 209-210 (GN).

The protein belongs to the GGGP/HepGP synthase family. Group I subfamily. Homodimer. Requires Mg(2+) as cofactor.

It carries out the reaction sn-glycerol 1-phosphate + all-trans-heptaprenyl diphosphate = 3-heptaprenyl-sn-glycero-1-phosphate + diphosphate. It functions in the pathway membrane lipid metabolism; glycerophospholipid metabolism. In terms of biological role, prenyltransferase that catalyzes in vivo the transfer of the heptaprenyl moiety of heptaprenyl pyrophosphate (HepPP; 35 carbon atoms) to the C3 hydroxyl of sn-glycerol-1-phosphate (G1P), producing heptaprenylglyceryl phosphate (HepGP). This reaction is an ether-bond-formation step in the biosynthesis of archaea-type G1P-based membrane lipids found in Bacillales. This is Heptaprenylglyceryl phosphate synthase from Exiguobacterium sibiricum (strain DSM 17290 / CCUG 55495 / CIP 109462 / JCM 13490 / 255-15).